The following is a 443-amino-acid chain: Diels-Alderase poxQ (443 aa).

The N-terminal stretch at 1–23 (MARIPLEFLSITLPVLLLAYCLA) is a signal peptide. Asn-78, Asn-97, and Asn-145 each carry an N-linked (GlcNAc...) asparagine glycan.

This sequence belongs to the Diels-Alderase family.

Its pathway is secondary metabolite biosynthesis. Functionally, diels-Alderase; part of the gene cluster that mediates the biosynthesis of oxaleimides, cytotoxic compounds containing an unusual disubstituted succinimide moiety. The first step of the pathway is provided by the HR-PKS poxF that serves in a new mode of collaborative biosynthesis with the PKS-NRPS poxE, by providing the olefin containing amino acid substrate via the synthesis of an ACP-bound dec-4-enoate. The cytochrome P450 monooxygenase poxM-catalyzed oxidation at the alpha-position creates the enzyme-bound 2-hydroxydec-4-enoyl-ACP thioester, which may be prone to spontaneous hydrolysis to yield 2-hydroxydec-4-enoic acid due to increased electrophilicity of the carbonyl. 2-hydroxydec-4-enoic acid can then be further oxidized by poxM to yield the alpha-ketoacid 2-oxodec-4-enoicacid, which is reductively aminated by the aminotransferase poxL to yield (S,E)-2-aminodec-4-enoic acid. The Hybrid PKS-NRPS synthetase poxE then performs condensation between the octaketide product of its PKS modules and the amino group of (S,E)-2-aminodec-4-enoic acid which is activated and incorporated by the adenylation domain. The resulting aminoacyl product can be cyclized by the Diels-Alderase PoxQ and reductively released by the reductive (R) domain of poxE to yield an aldehyde intermediate. The released aldehyde is then substrate for a Knoevenagel condensation by the hydrolyase poxO followed by an oxidation at the 5-position of the pyrrolidone ring. The presence of the olefin from the amino acid building block allows for migration of the substituted allyl group to occur. This allylic transposition reaction takes place in a conjugate addition, semipinacol-like fashion to yield a succinimide intermediate. Iterative two-electron oxidations of the C7 methyl of the succinimide intermediate to the carboxylic acid can be catalyzed by one of two remaining cytochrome P450 monooxygenasess poxC or poxD to yield oxaleimide A. Subsequent oxidation yields the maleimide scaffold oxaleimide I. Both oxaleimide A and oxaleimide I can undergo oxidative modifications in the decalin ring to yield the series of products oxaleimides B to H. In Penicillium oxalicum, this protein is Diels-Alderase poxQ.